We begin with the raw amino-acid sequence, 420 residues long: MSSNKIGNKLSLDKVDVKGKRVLIRVDYNVPLDKNNNITSTQRIDASIPTLEYCLKNGAKSIVLMSHLGRPDGLVKPEYSLKPVVKVLEDQLKRPIKFLSDCVGEQVEKECANPEEGTVILLENLRFHIEEEGSGVDAEGKKVKANPEKVKEFRESLTKLGDVYVNDAFGTAHRAHSSMVGINLPQKAAGFLMKKELEYFAKALESPSKPFLAILGGAKVSDKIKLIENLLYKVDEMIIGGGMAFTFKKFIDNKEIGSSLFEKTAEQITKDIIAKAAKNNVKLHFPVDYVIADKFDNDANIKTVTQDQGIPEGWMGLDCGPETIKENRDTISRAKTIVWNGPMGVFEKSNFEAGTKAAMDDVVNATTNGAITIIGGGDTATCAAKYNTEDKVSHVSTGGGASLELLEGKELPGVTALSDL.

Positions 26, 27, 28, 29, 42, 43, 66, 67, 69, 70, 125, 126, 173, and 174 each coordinate (2R)-3-phosphoglycerate. Position 199 is a phosphotyrosine (Tyr199). Position 206 is a phosphoserine (Ser206). A calmodulin binding region spans residues 209-228 (KPFLAILGGAKVSDKIKLIE). Gly217 is a binding site for ADP. Gly217 lines the CDP pocket. Positions 218 and 219 each coordinate AMP. Ala218 provides a ligand contact to ATP. Ala218 is a binding site for Mg(2+). A CDP-binding site is contributed by Asp222. Asp222 lines the Mg(2+) pocket. Lys223 provides a ligand contact to AMP. Lys223 provides a ligand contact to ATP. Gly241 lines the ADP pocket. Residue Gly241 participates in CDP binding. Residues Gly242 and Gly316 each contribute to the AMP site. The ATP site is built by Gly242 and Gly316. 2 residues coordinate CDP: Gly341 and Phe346. ADP is bound at residue Phe346. AMP is bound at residue Glu347. The ATP site is built by Glu347, Asp378, and Thr379. Asp378 contributes to the Mg(2+) binding site. Position 393 is a phosphoserine (Ser393).

It belongs to the phosphoglycerate kinase family. Monomer. Interacts with calmodulin in the presence of Ca(2+). Mg(2+) serves as cofactor.

It is found in the cytoplasm. It carries out the reaction (2R)-3-phosphoglycerate + ATP = (2R)-3-phospho-glyceroyl phosphate + ADP. It participates in carbohydrate degradation; glycolysis; pyruvate from D-glyceraldehyde 3-phosphate: step 2/5. In Dictyostelium discoideum (Social amoeba), this protein is Phosphoglycerate kinase.